The primary structure comprises 742 residues: Tegument protein UL47 (742 aa).

Over residues 1–10 (MDAARDGRPE) the composition is skewed to basic and acidic residues. 2 disordered regions span residues 1-128 (MDAA…TAHL) and 155-199 (EFPP…DDAA). The Nuclear localization signal motif lies at 10–30 (ERRPRRSGTYRTHPFQRPSAR). The segment covering 18–37 (TYRTHPFQRPSARRSLLDAL) has biased composition (low complexity). Positions 38–62 (RAADAEAAERPRVRRPRPDFQRPPD) are enriched in basic and acidic residues. Residues 63–88 (EDTSEDENVYDYIDGDSSDSADDYDS) are compositionally biased toward acidic residues. The Nuclear export signal motif lies at 95–122 (RGPNHGAGDAMDTDAPPERAPEGGAPQD). The short motif at 485-495 (LSAYLTLFVAL) is the Nuclear export signal element.

This sequence belongs to the alphaherpesvirinae HHV-1 UL47 family. Interacts with US3 kinase. Interacts with UL31 and UL34; these interactions seem important for efficient virion nuclear egress. Interacts with UL41/VHS. Phosphorylated by US3. This phosphorylation is required for proper nuclear localization.

The protein localises to the virion tegument. It is found in the host nucleus. The protein resides in the host cytoplasm. In terms of biological role, tegument protein that can bind to various RNA transcripts. Plays a role in the attenuation of selective viral and cellular mRNA degradation by modulating the activity of host shutoff RNase UL41/VHS. Also plays a role in the primary envelopment of virions in the perinuclear space, probably by interacting with two nuclear egress proteins UL31 and UL34. This is Tegument protein UL47 from Bos taurus (Bovine).